Reading from the N-terminus, the 377-residue chain is Sterol 24-C-methyltransferase erg6 (377 aa).

Belongs to the class I-like SAM-binding methyltransferase superfamily. Erg6/SMT family.

It is found in the microsome. Its subcellular location is the mitochondrion. It carries out the reaction lanosterol + S-adenosyl-L-methionine = eburicol + S-adenosyl-L-homocysteine + H(+). Its pathway is steroid metabolism; ergosterol biosynthesis. Specific and total activity is decreased in presence of alpha-bisabolol. In terms of biological role, sterol 24-C-methyltransferase; part of the third module of ergosterol biosynthesis pathway that includes the late steps of the pathway. Methylates lanosterol at C-24 to produce eburicol. The third module or late pathway involves the ergosterol synthesis itself through consecutive reactions that mainly occur in the endoplasmic reticulum (ER) membrane. Firstly, the squalene synthase erg9 catalyzes the condensation of 2 farnesyl pyrophosphate moieties to form squalene, which is the precursor of all steroids. Squalene synthase is crucial for balancing the incorporation of farnesyl diphosphate (FPP) into sterol and nonsterol isoprene synthesis. Secondly, squalene is converted into lanosterol by the consecutive action of the squalene epoxidase erg1 and the lanosterol synthase erg7. Then, the delta(24)-sterol C-methyltransferase erg6 methylates lanosterol at C-24 to produce eburicol. Eburicol is the substrate of the sterol 14-alpha demethylase encoded by cyp51A and cyp51B, to yield 4,4,24-trimethyl ergosta-8,14,24(28)-trienol. The C-14 reductase erg24 then reduces the C14=C15 double bond which leads to 4,4-dimethylfecosterol. A sequence of further demethylations at C-4, involving the C-4 demethylation complex containing the C-4 methylsterol oxidases erg25A or erg25B, the sterol-4-alpha-carboxylate 3-dehydrogenase erg26 and the 3-keto-steroid reductase erg27, leads to the production of fecosterol via 4-methylfecosterol. The C-8 sterol isomerase erg2 then catalyzes the reaction which results in unsaturation at C-7 in the B ring of sterols and thus converts fecosterol to episterol. The sterol-C5-desaturase erg3B then catalyzes the introduction of a C-5 double bond in the B ring to produce 5-dehydroepisterol. The 2 other sterol-C5-desaturases, erg3A and erg3C, seem to be less important in ergosterol biosynthesis. The C-22 sterol desaturase erg5 further converts 5-dehydroepisterol into ergosta-5,7,22,24(28)-tetraen-3beta-ol by forming the C-22(23) double bond in the sterol side chain. Finally, ergosta-5,7,22,24(28)-tetraen-3beta-ol is substrate of the C-24(28) sterol reductases erg4A and erg4B to produce ergosterol. Possible alternative sterol biosynthetic pathways might exist from fecosterol to ergosterol, depending on the activities of the erg3 isoforms. This is Sterol 24-C-methyltransferase erg6 from Aspergillus fumigatus (strain ATCC MYA-4609 / CBS 101355 / FGSC A1100 / Af293) (Neosartorya fumigata).